The chain runs to 376 residues: TraB domain-containing protein (376 aa).

Methionine 1 bears the N-acetylmethionine mark. The residue at position 64 (threonine 64) is a Phosphothreonine.

The chain is TraB domain-containing protein (Trabd) from Mus musculus (Mouse).